Consider the following 96-residue polypeptide: UPF0235 protein Acid345_4205 (96 aa).

The protein belongs to the UPF0235 family.

In Koribacter versatilis (strain Ellin345), this protein is UPF0235 protein Acid345_4205.